We begin with the raw amino-acid sequence, 75 residues long: DNA-directed RNA polymerase subunit epsilon (75 aa).

Belongs to the RNA polymerase subunit epsilon family. RNAP is composed of a core of 2 alpha, a beta and a beta' subunit. The core is associated with a delta subunit, and at least one of epsilon or omega. When a sigma factor is associated with the core the holoenzyme is formed, which can initiate transcription.

It catalyses the reaction RNA(n) + a ribonucleoside 5'-triphosphate = RNA(n+1) + diphosphate. Its function is as follows. A non-essential component of RNA polymerase (RNAP). The polypeptide is DNA-directed RNA polymerase subunit epsilon (Lactobacillus johnsonii (strain CNCM I-12250 / La1 / NCC 533)).